A 449-amino-acid polypeptide reads, in one-letter code: Mycosin-1 (449 aa).

The N-terminal stretch at 1 to 23 (MQRVAVMVLAVLLALFSAPPAWA) is a signal peptide. Cys-51 and Cys-120 are oxidised to a cystine. One can recognise a Peptidase S8 domain in the interval 66 to 389 (PWANDYLRIQ…AGVIDPVAAL (324 aa)). Residues Asp-92 and His-123 each act as charge relay system in the active site. Disordered stretches follow at residues 160–179 (FQPKGARQDPNDPNTTQTAG) and 240–259 (TGQDCSQNPPPDPSVPSDPR). Polar residues predominate over residues 170–179 (NDPNTTQTAG). An intrachain disulfide couples Cys-206 to Cys-244. The Charge relay system role is filled by Ser-334. A helical membrane pass occupies residues 421–441 (ITAVVIAGATLAFALGIGALA).

The protein belongs to the peptidase S8 family.

The protein localises to the cell membrane. Its function is as follows. May play a dual role in regulation of ESX-1 secretion and virulence. Acts as a protease that cleaves EspB. The polypeptide is Mycosin-1 (Mycolicibacterium smegmatis (strain ATCC 700084 / mc(2)155) (Mycobacterium smegmatis)).